The following is a 469-amino-acid chain: Mitochondrial adenyl nucleotide antiporter SLC25A25 (469 aa).

Positions 1–165 are regulatory N-terminal domain; the sequence is MLCLCLYVPI…LYWKHSTIFD (165 aa). Topologically, residues 1-189 are mitochondrial intermembrane; the sequence is MLCLCLYVPI…ERQTGMWWRH (189 aa). EF-hand domains are found at residues 47–80, 78–113, and 114–149; these read TYRQWKQKIVQAGDKDLDGQLDFEEFVHYLQDHE, DHEKKLRLVFKSLDKKNDGRIDAQEIMQSLRDLGVK, and ISEQQAEKILKSMDKNGTMTIDWNEWRDYHLLHPVE. The Ca(2+) site is built by Asp-60, Asp-62, Asp-64, Gln-66, and Glu-71. The tract at residues 151–160 is linker region; it reads IPEIILYWKH. The tract at residues 166-469 is C-terminal transmembrane transporter domain; the sequence is VGENLTVPDE…LKITLGVQSR (304 aa). Solcar repeat units lie at residues 184–270, 278–363, and 375–463; these read GMWW…MKRL, LRIH…LKNT, and PGVF…LKIT. Residues 190 to 207 traverse the membrane as a helical segment; that stretch reads LVAGGGAGAVSRTCTAPL. Residues 208-244 lie on the Mitochondrial matrix side of the membrane; the sequence is DRLKVLMQVHASRSNNMCIIGGFTQMIREGGAKSLWR. Residues 245–264 form a helical membrane-spanning segment; that stretch reads GNGINVLKIAPESAIKFMAY. The Mitochondrial intermembrane segment spans residues 265–287; the sequence is EQMKRLVGSDQETLRIHERLVAG. A helical transmembrane segment spans residues 288–301; that stretch reads SLAGAIAQSSIYPM. The Mitochondrial matrix segment spans residues 302 to 337; sequence EVLKTRMALRKTGQYSGMLDCAKRILAKEGVAAFYK. A helical transmembrane segment spans residues 338-357; that stretch reads GYIPNMLGIIPYAGIDLAVY. Residues 358-380 are Mitochondrial intermembrane-facing; the sequence is ETLKNTWLQRYAVNSADPGVFVL. Residues 381-398 form a helical membrane-spanning segment; that stretch reads LACGTISSTCGQLASYPL. At 399 to 437 the chain is on the mitochondrial matrix side; that stretch reads ALVRTRMQAQASIEGAPEVTMSSLFKQILRTEGAFGLYR. The helical transmembrane segment at 438–457 threads the bilayer; the sequence is GLAPNFMKVIPAVSISYVVY. The Mitochondrial intermembrane portion of the chain corresponds to 458–469; the sequence is ENLKITLGVQSR.

Belongs to the mitochondrial carrier (TC 2.A.29) family. Mainly present in the liver and the skeletal muscle (at protein level).

Its subcellular location is the mitochondrion inner membrane. It carries out the reaction Mg(2+)(out) + phosphate(in) + ATP(out) = Mg(2+)(in) + phosphate(out) + ATP(in). Its activity is regulated as follows. Activated by an increase in cytosolic calcium levels that induce a conformational change of the N-terminal regulatory domain, uncapping the channel and allowing transport. In terms of biological role, electroneutral antiporter that most probably mediates the transport of adenyl nucleotides through the inner mitochondrial membrane. Originally identified as an ATP-magnesium/inorganic phosphate antiporter, it could have a broader specificity for adenyl nucleotides. By regulating the mitochondrial matrix adenyl nucleotide pool could adapt to changing cellular energetic demands and indirectly regulate adenyl nucleotide-dependent metabolic pathways. This is Mitochondrial adenyl nucleotide antiporter SLC25A25 from Rattus norvegicus (Rat).